A 135-amino-acid chain; its full sequence is Ribosome-binding factor A (135 aa).

Belongs to the RbfA family. As to quaternary structure, monomer. Binds 30S ribosomal subunits, but not 50S ribosomal subunits or 70S ribosomes.

It is found in the cytoplasm. Functionally, one of several proteins that assist in the late maturation steps of the functional core of the 30S ribosomal subunit. Associates with free 30S ribosomal subunits (but not with 30S subunits that are part of 70S ribosomes or polysomes). Required for efficient processing of 16S rRNA. May interact with the 5'-terminal helix region of 16S rRNA. The chain is Ribosome-binding factor A from Aliivibrio fischeri (strain ATCC 700601 / ES114) (Vibrio fischeri).